Here is a 643-residue protein sequence, read N- to C-terminus: Inner kinetochore subunit cnp3 (643 aa).

Disordered stretches follow at residues 55-209 and 224-386; these read SIHL…AFPD and SIKD…QSDS. Composition is skewed to low complexity over residues 85–97 and 104–125; these read AASDEASHASSSD and DIPSSPLLMNSRALRASRGSSG. Positions 166 to 185 are enriched in basic and acidic residues; that stretch reads DFSRIKASPDRKKFEPRRST. Polar residues-rich tracts occupy residues 235 to 261, 295 to 304, and 313 to 322; these read YIQTISKPRRSYVQNNKSEQTIKPSKQ, LNRSLANNSQ, and KPLQESSINS. Basic residues-rich tracts occupy residues 332 to 341 and 360 to 370; these read VKRKRGRPRK and GAKKPAIRNAK. Residues 333–345 constitute a DNA-binding region (a.T hook); the sequence is KRKRGRPRKNKLE.

It belongs to the CENP-C/MIF2 family. As to quaternary structure, component of the inner kinetochore constitutive centromere-associated network (CCAN) (also known as central kinetochore Sim4 complex in fission yeast), which is composed of at least cnl2, cnp3, cnp20, fta1, fta2, fta3, fta4, fta6, fta7, mal2, mhf1, mhf2, mis6, mis15, mis17, sim4 and wip1.

It localises to the nucleus. Its subcellular location is the nucleoplasm. Its function is as follows. Component of the kinetochore, a multiprotein complex that assembles on centromeric DNA and attaches chromosomes to spindle microtubules, mediating chromosome segregation and sister chromatid segregation during meiosis and mitosis. Component of the inner kinetochore constitutive centromere-associated network (CCAN), which serves as a structural platform for outer kinetochore assembly. The chain is Inner kinetochore subunit cnp3 (cnp3) from Schizosaccharomyces pombe (strain 972 / ATCC 24843) (Fission yeast).